Reading from the N-terminus, the 855-residue chain is DNA mismatch repair protein MutS (855 aa).

Residue 617–624 (GPNMGGKS) participates in ATP binding.

Belongs to the DNA mismatch repair MutS family.

In terms of biological role, this protein is involved in the repair of mismatches in DNA. It is possible that it carries out the mismatch recognition step. This protein has a weak ATPase activity. This is DNA mismatch repair protein MutS from Baumannia cicadellinicola subsp. Homalodisca coagulata.